A 359-amino-acid chain; its full sequence is Uroporphyrinogen decarboxylase (359 aa).

Positions 28, 30, 32, 79, 157, 212, and 335 each coordinate coproporphyrinogen III.

The protein belongs to the uroporphyrinogen decarboxylase family. As to quaternary structure, monomer.

The protein localises to the nucleus. The protein resides in the cytoplasm. It carries out the reaction uroporphyrinogen III + 4 H(+) = coproporphyrinogen III + 4 CO2. The enzyme catalyses uroporphyrinogen I + 4 H(+) = coproporphyrinogen I + 4 CO2. It participates in porphyrin-containing compound metabolism; protoporphyrin-IX biosynthesis; coproporphyrinogen-III from 5-aminolevulinate: step 4/4. Its function is as follows. Catalyzes the sequential decarboxylation of four acetate groups of uroporphyrinogen-III (octacarboxyporphyrin) to yield coproporphyrinogen-III (tetracarboxyporphyrin) with the formation of intermediate hepta-, hexa- and penta-carboxylate porphyrinogens in the heme biosynthesis pathway. Acts on a number of porphyrinogens, but only coproporphyrinogen III can ultimately be converted to heme. The sequence is that of Uroporphyrinogen decarboxylase (hem12) from Schizosaccharomyces pombe (strain 972 / ATCC 24843) (Fission yeast).